A 247-amino-acid polypeptide reads, in one-letter code: MALLEICCYSAECAVTAQQYGADRIELCAAPKEGGLTPSYGVLKSVRQTVTIPVHPIIRPRGGDFFYSAGEFDAMLEDIAMVHDLGFPGLVLGLLDEDGNVDMPRMRQVMTAAKGMAVTFHRAFDMCRNPRQAFDKLAELGVARILTSGQESSAEKGIKLITELKAQSGVPIIMAGAGVRASNLEIFINAGVEELHSSAGKWTPSPMRYRNTGLSMSTDAEADEYSRYGVEGESVAVMKSIIERHHV.

Belongs to the CutC family.

The protein localises to the cytoplasm. This chain is PF03932 family protein CutC, found in Enterobacter sp. (strain 638).